The primary structure comprises 69 residues: U2-agatoxin-Ao1o (69 aa).

An N-terminal signal peptide occupies residues 1 to 20; it reads MKAIISLLLISAMVFSMFEA. Residues 21 to 34 constitute a propeptide that is removed on maturation; the sequence is VPVRRRFTAFEGER. 3 disulfides stabilise this stretch: Cys36-Cys52, Cys43-Cys57, and Cys51-Cys67. At Leu68 the chain carries Leucine amide.

Belongs to the neurotoxin 01 (U2-agtx) family. Expressed by the venom gland.

Its subcellular location is the secreted. In terms of biological role, insect active toxin causing rapid but reversible paralysis in crickets. No activity shown in mammals. Does not show effect on mammalian voltage-gated calcium channels. The polypeptide is U2-agatoxin-Ao1o (Agelena orientalis (Funnel-web spider)).